The primary structure comprises 294 residues: Flavin-dependent thymidylate synthase (294 aa).

The ThyX domain maps to glycine 27–tyrosine 250. Residues threonine 73, arginine 96–arginine 98, and glutamate 104 contribute to the FAD site. DUMP is bound by residues glutamine 93 to arginine 96, glutamate 104 to arginine 108, and arginine 189. Residues arginine 96–serine 106 carry the ThyX motif motif. Residues asparagine 205–histidine 207 and histidine 211 contribute to the FAD site. Residue arginine 216 coordinates dUMP. Arginine 216 (involved in ionization of N3 of dUMP, leading to its activation) is an active-site residue.

The protein belongs to the thymidylate synthase ThyX family. Homotetramer. Requires FAD as cofactor.

It carries out the reaction dUMP + (6R)-5,10-methylene-5,6,7,8-tetrahydrofolate + NADPH + H(+) = dTMP + (6S)-5,6,7,8-tetrahydrofolate + NADP(+). Its pathway is pyrimidine metabolism; dTTP biosynthesis. In terms of biological role, catalyzes the reductive methylation of 2'-deoxyuridine-5'-monophosphate (dUMP) to 2'-deoxythymidine-5'-monophosphate (dTMP) while utilizing 5,10-methylenetetrahydrofolate (mTHF) as the methyl donor, and NADPH and FADH(2) as the reductant. This chain is Flavin-dependent thymidylate synthase, found in Rickettsia conorii (strain ATCC VR-613 / Malish 7).